A 327-amino-acid chain; its full sequence is Fructose import binding protein FruE (327 aa).

A signal peptide spans 1–22 (MKNWKKAIALVASAAALVSVAA). Cysteine 23 is lipidated: N-palmitoyl cysteine. The S-diacylglycerol cysteine moiety is linked to residue cysteine 23.

This sequence belongs to the bacterial solute-binding protein 2 family. The complex is composed of an ATP-binding protein (FruK), two transmembrane proteins (FruF and FruG) and a solute-binding protein (FruE).

The protein resides in the cell membrane. Functionally, part of the high-affinity ABC transporter complex FruEKFG involved in fructose uptake. Can also transport ribose and xylose, with lower affinity. Binds fructose, ribose and xylose, with fructose as the preferred substrate. This is Fructose import binding protein FruE from Bifidobacterium longum (strain NCC 2705).